We begin with the raw amino-acid sequence, 330 residues long: D-cysteine desulfhydrase (330 aa).

Position 52 is an N6-(pyridoxal phosphate)lysine (K52).

Belongs to the ACC deaminase/D-cysteine desulfhydrase family. In terms of assembly, homodimer. It depends on pyridoxal 5'-phosphate as a cofactor.

The catalysed reaction is D-cysteine + H2O = hydrogen sulfide + pyruvate + NH4(+) + H(+). In terms of biological role, catalyzes the alpha,beta-elimination reaction of D-cysteine and of several D-cysteine derivatives. It could be a defense mechanism against D-cysteine. The protein is D-cysteine desulfhydrase of Yersinia pseudotuberculosis serotype O:1b (strain IP 31758).